Reading from the N-terminus, the 292-residue chain is Elongation factor Ts (292 aa).

An involved in Mg(2+) ion dislocation from EF-Tu region spans residues 81 to 84 (TDFV).

Belongs to the EF-Ts family.

It is found in the cytoplasm. Associates with the EF-Tu.GDP complex and induces the exchange of GDP to GTP. It remains bound to the aminoacyl-tRNA.EF-Tu.GTP complex up to the GTP hydrolysis stage on the ribosome. This Psychromonas ingrahamii (strain DSM 17664 / CCUG 51855 / 37) protein is Elongation factor Ts.